We begin with the raw amino-acid sequence, 468 residues long: 3-isopropylmalate dehydratase large subunit (468 aa).

Residues Cys348, Cys409, and Cys412 each coordinate [4Fe-4S] cluster.

Belongs to the aconitase/IPM isomerase family. LeuC type 1 subfamily. In terms of assembly, heterodimer of LeuC and LeuD. [4Fe-4S] cluster is required as a cofactor.

The enzyme catalyses (2R,3S)-3-isopropylmalate = (2S)-2-isopropylmalate. Its pathway is amino-acid biosynthesis; L-leucine biosynthesis; L-leucine from 3-methyl-2-oxobutanoate: step 2/4. In terms of biological role, catalyzes the isomerization between 2-isopropylmalate and 3-isopropylmalate, via the formation of 2-isopropylmaleate. The polypeptide is 3-isopropylmalate dehydratase large subunit (Dechloromonas aromatica (strain RCB)).